A 533-amino-acid polypeptide reads, in one-letter code: D-3-phosphoglycerate dehydrogenase (533 aa).

Alanine 2 carries the N-acetylalanine modification. Phosphoserine is present on serine 14. The residue at position 21 (lysine 21) is an N6-acetyllysine; alternate. A Glycyl lysine isopeptide (Lys-Gly) (interchain with G-Cter in SUMO1); alternate cross-link involves residue lysine 21. Lysine 21 is covalently cross-linked (Glycyl lysine isopeptide (Lys-Gly) (interchain with G-Cter in SUMO2); alternate). Position 58 is an N6-acetyllysine (lysine 58). NAD(+) contacts are provided by residues threonine 78, 155–156, aspartate 175, threonine 207, 234–236, and aspartate 260; these read RI and CAR. Threonine 78 bears the Phosphothreonine mark. Residue arginine 236 is part of the active site. Residue glutamate 265 is part of the active site. Histidine 283 functions as the Proton donor in the catalytic mechanism. 283 to 286 serves as a coordination point for NAD(+); sequence HLGA.

It belongs to the D-isomer specific 2-hydroxyacid dehydrogenase family. Homotetramer.

It catalyses the reaction (2R)-3-phosphoglycerate + NAD(+) = 3-phosphooxypyruvate + NADH + H(+). The enzyme catalyses (R)-2-hydroxyglutarate + NAD(+) = 2-oxoglutarate + NADH + H(+). The catalysed reaction is (S)-malate + NAD(+) = oxaloacetate + NADH + H(+). Its pathway is amino-acid biosynthesis; L-serine biosynthesis; L-serine from 3-phospho-D-glycerate: step 1/3. Its function is as follows. Catalyzes the reversible oxidation of 3-phospho-D-glycerate to 3-phosphonooxypyruvate, the first step of the phosphorylated L-serine biosynthesis pathway. Also catalyzes the reversible oxidation of 2-hydroxyglutarate to 2-oxoglutarate and the reversible oxidation of (S)-malate to oxaloacetate. In Pongo abelii (Sumatran orangutan), this protein is D-3-phosphoglycerate dehydrogenase (PHGDH).